The chain runs to 86 residues: RNA-binding protein Hfq (86 aa).

Residues 9 to 68 enclose the Sm domain; it reads DIFLNVLRRERIQVSIYLFNGIKLQGHIESFDQFVIVLKNTISQMVYKHAVSTIVPSKFV.

Belongs to the Hfq family. In terms of assembly, homohexamer.

RNA chaperone that binds small regulatory RNA (sRNAs) and mRNAs to facilitate mRNA translational regulation in response to envelope stress, environmental stress and changes in metabolite concentrations. Also binds with high specificity to tRNAs. This is RNA-binding protein Hfq from Baumannia cicadellinicola subsp. Homalodisca coagulata.